The primary structure comprises 488 residues: MTNSGTASGVRVRIAPSPTGEPHVGTAYIALFNYLFAKKHGGEFILRIEDTDATRSTPEFETKVLDALKWCGLEWKEGPDIGGPYGPYRQSDRKPMYQPYAQELLDKGHAFRCFCTPARLEQMRETQRAAGKPPKYDGLCLNLTAEEVTARMAAGETTVIRMKIPAEGSCDFTDGVYGDVSIPWDSVDMQVLIKADGMPTYHMANVIDDHLMKITHVARGEEWLASVPKHILLYRYFGWEQPVFMHLSLMRNADKSKLSKRKNPTSISYYSALGYIPEALMNFLGLFFMQIAEGEELLTMEELSEKFDPDNLSKAGAIFDIQKLDWLNGRWIREKLSEEEFRARVLTWAMENDRLMAGLRLSQTRISKLGELPDLASFLLKSDLGLQPSDFAKIKSPPEEILEILNTVQPDLEKILEWNVETIEAELRAVADRLGKKLKVVVAPLFVAVSGSSRSLPLFDSMALLGRSVVRQRLKLAAQAVAALVGSK.

The 'HIGH' region signature appears at 16–26 (PSPTGEPHVGT). Residues 257-261 (KLSKR) carry the 'KMSKS' region motif. Residue Lys260 participates in ATP binding.

This sequence belongs to the class-I aminoacyl-tRNA synthetase family. Glutamate--tRNA ligase type 1 subfamily. As to quaternary structure, monomer.

Its subcellular location is the cytoplasm. The catalysed reaction is tRNA(Glu) + L-glutamate + ATP = L-glutamyl-tRNA(Glu) + AMP + diphosphate. Functionally, catalyzes the attachment of glutamate to tRNA(Glu) in a two-step reaction: glutamate is first activated by ATP to form Glu-AMP and then transferred to the acceptor end of tRNA(Glu). This Rhizobium etli (strain ATCC 51251 / DSM 11541 / JCM 21823 / NBRC 15573 / CFN 42) protein is Glutamate--tRNA ligase.